A 250-amino-acid polypeptide reads, in one-letter code: Glycerol uptake facilitator protein-like 5 (250 aa).

The next 2 helical transmembrane spans lie at Glu-12–Leu-32 and Gly-46–Phe-66. The NPA 1 motif lies at Asn-75 to Ala-77. 3 helical membrane passes run Ile-85–Ile-105, Leu-142–Leu-162, and Ile-172–Gly-192. Residues Asn-199–Ala-201 carry the NPA 2 motif. Residues Val-230–Leu-250 traverse the membrane as a helical segment.

It belongs to the MIP/aquaporin (TC 1.A.8) family.

It is found in the cell membrane. Probable transporter that facilitates the transmembrane diffusion of an unknown substrate. Is not permeable to water, dihydroxyacetone, glycerol, urea, H(2)O(2) and D/L-lactic acid. In Lactiplantibacillus plantarum (strain ATCC BAA-793 / NCIMB 8826 / WCFS1) (Lactobacillus plantarum), this protein is Glycerol uptake facilitator protein-like 5.